The chain runs to 297 residues: Large ribosomal subunit protein uL10 (297 aa).

The protein belongs to the universal ribosomal protein uL10 family. In terms of assembly, part of the 50S ribosomal subunit. Forms part of the ribosomal stalk which helps the ribosome interact with GTP-bound translation factors. Forms a heptameric L10(L12)2(L12)2(L12)2 complex, where L10 forms an elongated spine to which the L12 dimers bind in a sequential fashion.

Forms part of the ribosomal stalk, playing a central role in the interaction of the ribosome with GTP-bound translation factors. The protein is Large ribosomal subunit protein uL10 of Methanococcus voltae.